Here is a 316-residue protein sequence, read N- to C-terminus: Ferrochelatase (316 aa).

Residues His190 and Glu271 each contribute to the Fe cation site.

It belongs to the ferrochelatase family.

The protein localises to the cytoplasm. It catalyses the reaction heme b + 2 H(+) = protoporphyrin IX + Fe(2+). Its pathway is porphyrin-containing compound metabolism; protoheme biosynthesis; protoheme from protoporphyrin-IX: step 1/1. Catalyzes the ferrous insertion into protoporphyrin IX. In Sulfurimonas denitrificans (strain ATCC 33889 / DSM 1251) (Thiomicrospira denitrificans (strain ATCC 33889 / DSM 1251)), this protein is Ferrochelatase.